The sequence spans 95 residues: Co-chaperonin GroES (95 aa).

The protein belongs to the GroES chaperonin family. In terms of assembly, heptamer of 7 subunits arranged in a ring. Interacts with the chaperonin GroEL.

The protein resides in the cytoplasm. Together with the chaperonin GroEL, plays an essential role in assisting protein folding. The GroEL-GroES system forms a nano-cage that allows encapsulation of the non-native substrate proteins and provides a physical environment optimized to promote and accelerate protein folding. GroES binds to the apical surface of the GroEL ring, thereby capping the opening of the GroEL channel. The polypeptide is Co-chaperonin GroES (Clostridium botulinum (strain ATCC 19397 / Type A)).